The chain runs to 731 residues: Cucumisin (731 aa).

The signal sequence occupies residues 1–22; it reads MSSSLIFKLFFFSLFFSNRLAS. Residues 23–110 constitute a propeptide, activation peptide; sequence RLDSDDDGKN…VFLNEMNELH (88 aa). One can recognise an Inhibitor I9 domain in the interval 34–110; sequence YIVYMGRKLE…VFLNEMNELH (77 aa). The region spanning 114-584 is the Peptidase S8 domain; that stretch reads SWDFLGFPLT…SGHVNPLKAV (471 aa). Aspartate 140 serves as the catalytic Charge relay system. A disulfide bond links cysteine 166 and cysteine 174. Histidine 204 functions as the Charge relay system in the catalytic mechanism. 2 disulfides stabilise this stretch: cysteine 245–cysteine 250 and cysteine 380–cysteine 397. N-linked (GlcNAc...) asparagine glycosylation occurs at asparagine 466. Serine 525 serves as the catalytic Charge relay system. The propeptide occupies 616-731; that stretch reads GDYSACTSGN…RSPITITSLV (116 aa). A glycan (N-linked (GlcNAc...) asparagine) is linked at asparagine 652.

This sequence belongs to the peptidase S8 family. In terms of assembly, monomer and dimer. In terms of processing, the C-terminal propeptide is autocleaved. As to expression, specifically expressed in fruits. Expressed in sarcocarp (at protein level).

Its subcellular location is the secreted. It catalyses the reaction Hydrolysis of proteins with broad specificity.. The polypeptide is Cucumisin (Cucumis melo (Muskmelon)).